We begin with the raw amino-acid sequence, 1040 residues long: MSYFLASCLGVGLLSTVSCSLQGLTSHYRENIPRFKHVANERYEVFLGDEIKFDCQTAASKISAFVEWYRNDKLLKNDQIDKDKIRKDNNRMMLHLKNIDVSDQGLWSCRVHNAYGQISRNFTVEVIDFCDYFLFPDIHHLNIPMECVCLWKYNKEAKRSDVNYAAVTGEVCSKYASRMINRARKPLPMIPCFGDHCKEFDTTPVSDFGLPGKPEDDPLVKRVVLKKDDVIVPVHDSEESPSESRTEFINADEKENKEDEEEDYSVSQPVAPDAGLTELNITAEEPPYFKSNDNIVLFNETHALPAGRTLKLNCRAKGYPEPQIIWYKNGKMLKKSSARSGGYEFKFNRWSLEVEDAVVADSGEFHCEALNKVGSAKKYFHVIIVNRMRRPPIIVPNILANQSVNINDTATFHCKVVSDLLPHIIWVRINKINGSYSYYNNSAEEYMFNYTEMDTFDKAHVHHVGDESTLTIFNVSLDDQGIYACLSGNSLGMSMANATLTVNEFMAIHLLTGDEPKIDRWTTSDYIFTTILLFLLLAATLFGILFMVCKQTLHKKGFMDDTVGLVARKKRVVVSKRPMNEDNENSDDEPSPYQIQIIETPITKKEAARKQRKRMNSENTVLSEYEVDSDPVWEVERSKLSLVHMLGEGAFGEVWKATYKETENNEIAVAVKKLKMSAHEKELIDLVSEMETFKVIGEHENVLRLIGCCTGAGPLYVVVELCKHGNLRDFLRAHRPKEEKAKKSSQELTDYLEPRKASDKDDIELIPNLTQRHLVQFAWQVAQGMNFLASKKIIHRDLAARNVLVGDGHVLKISDFGLSRDVHCNDYYRKRGNGRLPIKWMALEALDSNVYTVESDVWSYGVLLWEIMTLGGTPYPTIAMPELYANLKEGYRMEPPHLCPQEVYHLMCSCWREKLEERPSFKTIVDYLDWMLTMTNETIEGSQEFNDQFFSERSTASGPVSPMESFQKKRKHRPLSAPVNLPSEPQHTICDDYESNFSVEPPNDPNHLYCNDNMLKNHIITPETSQRIPSNNNSMSKPEF.

An N-terminal signal peptide occupies residues 1–19; it reads MSYFLASCLGVGLLSTVSC. The Extracellular segment spans residues 20–525; that stretch reads SLQGLTSHYR…PKIDRWTTSD (506 aa). The region spanning 33 to 125 is the Ig-like C2-type 1 domain; it reads PRFKHVANER…GQISRNFTVE (93 aa). A disulfide bridge links C55 with C109. A glycan (N-linked (GlcNAc...) asparagine) is linked at N121. Residues 234-257 show a composition bias toward basic and acidic residues; it reads VHDSEESPSESRTEFINADEKENK. The tract at residues 234–267 is disordered; sequence VHDSEESPSESRTEFINADEKENKEDEEEDYSVS. 2 N-linked (GlcNAc...) asparagine glycosylation sites follow: N280 and N299. Ig-like C2-type domains are found at residues 287–383 and 391–501; these read PYFK…FHVI and PPII…ATLT. A disulfide bond links C314 and C367. Residues N401, N407, N433, N440, N449, N474, and N497 are each glycosylated (N-linked (GlcNAc...) asparagine). Cysteines 414 and 485 form a disulfide. The chain crosses the membrane as a helical span at residues 526-549; sequence YIFTTILLFLLLAATLFGILFMVC. Residues 550 to 1040 lie on the Cytoplasmic side of the membrane; it reads KQTLHKKGFM…NNNSMSKPEF (491 aa). The Protein kinase domain maps to 640–931; sequence LSLVHMLGEG…KTIVDYLDWM (292 aa). ATP contacts are provided by residues 646-654 and K672; that span reads LGEGAFGEV. D797 serves as the catalytic Proton acceptor. Y828 carries the phosphotyrosine; by autocatalysis modification. Disordered stretches follow at residues 952-984 and 1021-1040; these read ERST…LPSE and TPET…KPEF. The segment covering 1022-1040 has biased composition (polar residues); sequence PETSQRIPSNNNSMSKPEF.

This sequence belongs to the protein kinase superfamily. Tyr protein kinase family. Fibroblast growth factor receptor subfamily. Mg(2+) serves as cofactor. Activity is regulated by the phosphatase clr-1, however it is not known whether clr-1 acts directly on egl-15.

It localises to the membrane. It carries out the reaction L-tyrosyl-[protein] + ATP = O-phospho-L-tyrosyl-[protein] + ADP + H(+). Receptor tyrosine kinase required for larval development. May phosphorylate adapter protein soc-1 which in turn may result in the recruitment and/or activation of phosphatase ptp-2. May activate the Ras/MAPK kinase signaling pathway which includes sem-5, sos-1, let-60/Ras, lin-45/Raf, mek-2 and mpk-1. Acts in the hypodermis to regulate axon growth and fluid homeostasis. Activates protein degradation in muscles. Probably following interaction with ligand let-756, negatively regulates membrane protrusion from body wall muscles during larval development. Plays a role in nicotinic acetylcholine receptor (nAChR)-mediated sensitivity to nicotine. Regulates synaptic levels of nAChR subunit lev-1 in the nerve cord. Its function is as follows. Affects the maintenance of axon position without affecting axon growth. Interaction with egl-17 is required for the guidance of sex myoblast migration during gonad development. Functionally, interaction with let-756 appears to play a role in maintaining body morphology at higher temperatures. This Caenorhabditis elegans protein is Myoblast growth factor receptor egl-15 (egl-15).